The following is a 573-amino-acid chain: N(2)-(2-carboxyethyl)arginine synthase (573 aa).

The substrate site is built by Tyr-271 and Asp-301. 410 to 413 (IGFF) contributes to the thiamine diphosphate binding site. Residue 414 to 415 (RH) participates in substrate binding. Residue 436 to 438 (SSF) participates in thiamine diphosphate binding. Asp-463 lines the Mg(2+) pocket. Thiamine diphosphate is bound by residues 464–465 (GG), 490–495 (NDTNGL), and Tyr-561. 2 residues coordinate Mg(2+): Asn-490 and Thr-492. Leu-571 provides a ligand contact to substrate.

In terms of assembly, homotetramer; dimer of dimers. Requires Mg(2+) as cofactor. Thiamine diphosphate serves as cofactor.

The catalysed reaction is D-glyceraldehyde 3-phosphate + L-arginine = N(2)-(2-carboxyethyl)-L-arginine + phosphate + H(+). Functionally, involved in the biosynthesis of the beta-lactamase inhibitor, clavulanic acid. Catalyzes the thiamine diphosphate (ThDP) dependent condensation of D-glyceraldehyde-3-phosphate (D-G3P) with L-arginine to yield the beta-amino acid, N2-(2-carboxyethyl)arginine (CEA) via a beta-elimination resulting in the formation of an enol which undergoes a second elimination to generate the alpha,beta-unsaturated acryloyl-ThDP. This Streptomyces clavuligerus protein is N(2)-(2-carboxyethyl)arginine synthase.